A 117-amino-acid chain; its full sequence is Large ribosomal subunit protein bL19 (117 aa).

The protein belongs to the bacterial ribosomal protein bL19 family.

This protein is located at the 30S-50S ribosomal subunit interface and may play a role in the structure and function of the aminoacyl-tRNA binding site. This chain is Large ribosomal subunit protein bL19, found in Shewanella baltica (strain OS155 / ATCC BAA-1091).